The chain runs to 463 residues: Chromosomal replication initiator protein DnaA (463 aa).

A domain I, interacts with DnaA modulators region spans residues 1–84 (MNTNQIILTN…QLFQHYNNAI (84 aa)). Residues 84–124 (IKTVEIITKELPASNQATLELPTKTFADIGSSELNSENIFS) form a domain II region. Positions 125-343 (TFDIRFTFDN…GALNKVIAHS (219 aa)) are domain III, AAA+ region. The ATP site is built by glycine 171, glycine 173, lysine 174, and threonine 175. The segment at 344–463 (NFTAKEITLE…INLMMKILQN (120 aa)) is domain IV, binds dsDNA.

This sequence belongs to the DnaA family. Oligomerizes as a right-handed, spiral filament on DNA at oriC.

It localises to the cytoplasm. Plays an essential role in the initiation and regulation of chromosomal replication. ATP-DnaA binds to the origin of replication (oriC) to initiate formation of the DNA replication initiation complex once per cell cycle. Binds the DnaA box (a 9 base pair repeat at the origin) and separates the double-stranded (ds)DNA. Forms a right-handed helical filament on oriC DNA; dsDNA binds to the exterior of the filament while single-stranded (ss)DNA is stabiized in the filament's interior. The ATP-DnaA-oriC complex binds and stabilizes one strand of the AT-rich DNA unwinding element (DUE), permitting loading of DNA polymerase. After initiation quickly degrades to an ADP-DnaA complex that is not apt for DNA replication. Binds acidic phospholipids. This chain is Chromosomal replication initiator protein DnaA, found in Rickettsia bellii (strain RML369-C).